Consider the following 201-residue polypeptide: Imidazoleglycerol-phosphate dehydratase (201 aa).

Belongs to the imidazoleglycerol-phosphate dehydratase family.

The protein resides in the cytoplasm. It carries out the reaction D-erythro-1-(imidazol-4-yl)glycerol 3-phosphate = 3-(imidazol-4-yl)-2-oxopropyl phosphate + H2O. Its pathway is amino-acid biosynthesis; L-histidine biosynthesis; L-histidine from 5-phospho-alpha-D-ribose 1-diphosphate: step 6/9. In Synechococcus sp. (strain CC9311), this protein is Imidazoleglycerol-phosphate dehydratase.